A 123-amino-acid chain; its full sequence is Small ribosomal subunit protein uS12cz/uS12cy (123 aa).

This sequence belongs to the universal ribosomal protein uS12 family. In terms of assembly, part of the 30S ribosomal subunit.

The protein resides in the plastid. Its subcellular location is the chloroplast. In terms of biological role, with S4 and S5 plays an important role in translational accuracy. Located at the interface of the 30S and 50S subunits. The sequence is that of Small ribosomal subunit protein uS12cz/uS12cy (rps12-A) from Nandina domestica (Heavenly bamboo).